The following is a 410-amino-acid chain: ORC1-type DNA replication protein 4 (410 aa).

ATP-binding positions include 73–77, Tyr220, and Arg232; that span reads TGKSL.

Belongs to the CDC6/cdc18 family.

In terms of biological role, involved in regulation of DNA replication. The polypeptide is ORC1-type DNA replication protein 4 (orc4) (Halobacterium salinarum (strain ATCC 700922 / JCM 11081 / NRC-1) (Halobacterium halobium)).